We begin with the raw amino-acid sequence, 217 residues long: Large ribosomal subunit protein bL25 (217 aa).

The segment at 178-217 (VVAPTEEPTEEEIEAMEGEQQTEEPEVVGESKEDEEKTEE) is disordered. Over residues 184 to 205 (EPTEEEIEAMEGEQQTEEPEVV) the composition is skewed to acidic residues. Residues 206–217 (GESKEDEEKTEE) show a composition bias toward basic and acidic residues.

The protein belongs to the bacterial ribosomal protein bL25 family. CTC subfamily. In terms of assembly, part of the 50S ribosomal subunit; part of the 5S rRNA/L5/L18/L25 subcomplex. Contacts the 5S rRNA. Binds to the 5S rRNA independently of L5 and L18.

This is one of the proteins that binds to the 5S RNA in the ribosome where it forms part of the central protuberance. The chain is Large ribosomal subunit protein bL25 from Staphylococcus aureus (strain MRSA252).